Reading from the N-terminus, the 211-residue chain is uncharacterized protein (211 aa).

Positions 155 to 211 (AAENASEEGDKKQIITDSGKLPETEELTETTNEDLDIKQFSPYSSESSANVSSYNKS) are disordered. Acidic residues predominate over residues 178-188 (TEELTETTNED). Positions 195 to 211 (SPYSSESSANVSSYNKS) are enriched in low complexity.

This is an uncharacterized protein from Schizosaccharomyces pombe (strain 972 / ATCC 24843) (Fission yeast).